Reading from the N-terminus, the 561-residue chain is CWF19-like protein mug161 (561 aa).

The tract at residues 286 to 338 (QQTNKFHKSKSSTALFKSKKDSSSSLNKMHKSESHSALNNLHKSESGTSLNNR) is disordered. At S296 the chain carries Phosphoserine. Position 298 is a phosphothreonine (T298). A phosphoserine mark is found at S317, S319, S331, and S334. Polar residues predominate over residues 320–337 (HSALNNLHKSESGTSLNN).

It belongs to the CWF19 family.

It is found in the nucleus. Has a role in meiosis. This chain is CWF19-like protein mug161 (mug161), found in Schizosaccharomyces pombe (strain 972 / ATCC 24843) (Fission yeast).